A 495-amino-acid polypeptide reads, in one-letter code: Thiosulfate sulfurtransferase/rhodanese-like domain-containing protein 2 (495 aa).

Phosphoserine is present on serine 268. Residues 300-395 (EQGNTIILDC…YLEEFPDGFY (96 aa)) form the Rhodanese domain. Residue cysteine 354 is the Cysteine persulfide intermediate of the active site.

The sequence is that of Thiosulfate sulfurtransferase/rhodanese-like domain-containing protein 2 (Tstd2) from Mus musculus (Mouse).